Reading from the N-terminus, the 492-residue chain is Probable proline dehydrogenase, mitochondrial (492 aa).

This sequence belongs to the proline oxidase family. It depends on FAD as a cofactor.

It localises to the mitochondrion. The catalysed reaction is L-proline + a quinone = (S)-1-pyrroline-5-carboxylate + a quinol + H(+). Functionally, converts proline to delta-1-pyrroline-5-carboxylate. In Schizosaccharomyces pombe (strain 972 / ATCC 24843) (Fission yeast), this protein is Probable proline dehydrogenase, mitochondrial.